A 1141-amino-acid polypeptide reads, in one-letter code: DNA-directed RNA polymerase subunit beta (1141 aa).

Composition is skewed to acidic residues over residues 1063–1074 (EIEIKEDDDDVS) and 1096–1141 (GGNE…GDEE). Residues 1063-1141 (EIEIKEDDDD…VPDEAYGDEE (79 aa)) are disordered.

This sequence belongs to the RNA polymerase beta chain family. In terms of assembly, the RNAP catalytic core consists of 2 alpha, 1 beta, 1 beta' and 1 omega subunit. When a sigma factor is associated with the core the holoenzyme is formed, which can initiate transcription.

It carries out the reaction RNA(n) + a ribonucleoside 5'-triphosphate = RNA(n+1) + diphosphate. Functionally, DNA-dependent RNA polymerase catalyzes the transcription of DNA into RNA using the four ribonucleoside triphosphates as substrates. The polypeptide is DNA-directed RNA polymerase subunit beta (Moorella thermoacetica (strain ATCC 39073 / JCM 9320)).